A 252-amino-acid chain; its full sequence is Bridging integrator 3 homolog (252 aa).

In terms of domain architecture, BAR spans 8 to 231 (GGPKKQIVPK…VDEVQLSDAE (224 aa)). 3 coiled-coil regions span residues 17-57 (KTVE…MSKS), 119-150 (SLNM…KDKT), and 224-244 (EVQL…AELR).

The protein localises to the cytoplasm. It localises to the cytoskeleton. Its function is as follows. Involved in cytokinesis and septation where it has a role in the localization of F-actin. This Xenopus laevis (African clawed frog) protein is Bridging integrator 3 homolog (bin3).